A 370-amino-acid chain; its full sequence is Serine O-succinyltransferase (370 aa).

Positions 46–355 (AILIVTGLSP…PQGHDAFLVD (310 aa)) constitute an AB hydrolase-1 domain. The interval 52 to 55 (GLSP) is important for substrate specificity. Catalysis depends on Ser149, which acts as the Nucleophile. Arg218 provides a ligand contact to substrate. Catalysis depends on residues Asp316 and His349. Asp350 lines the substrate pocket.

The protein belongs to the AB hydrolase superfamily. MetX family. In terms of assembly, homodimer.

The protein resides in the cytoplasm. The catalysed reaction is succinyl-CoA + L-serine = O-succinyl-L-serine + CoA. It catalyses the reaction L-homoserine + succinyl-CoA = O-succinyl-L-homoserine + CoA. Its pathway is amino-acid biosynthesis; L-cysteine biosynthesis; L-cysteine from L-serine: step 1/2. In terms of biological role, transfers a succinyl group from succinyl-CoA to L-serine, forming succinyl-L-serine. In vitro, also has homoserine succinyl transferase activity. The sequence is that of Serine O-succinyltransferase from Stenotrophomonas maltophilia (Pseudomonas maltophilia).